The following is a 265-amino-acid chain: MAEELRIMENKSREDTNLSPVSKIEIYSFFDPFSKDCFKLSAILSKLRIEYNKYIKVRHILNPSLKVLTKCQAQSTSDFDNIALAYKAAELQGRIRAERFIHLMQNEIIPKRDIITEDMISDCINNAGIDYQVFKEDLQKDKLTDSLKVDLHIAREMEIEQAPSLVFFSENVHEEGLKVEGLYPYHIYTYIINELMGQPIEKNLPPKLEYYIQKKQLVTMEELLTIYEWPEKLLNKELKKLTLQQKVEKLQYPEGEFWKSKMPQC.

It belongs to the SpxH family. In terms of assembly, interacts with Spx.

The protein resides in the cytoplasm. In terms of biological role, adapter protein required for efficient degradation of Spx by ClpXP under non-stress conditions. Interaction with Spx stabilizes Spx and exposes the C-terminus of Spx for recognition and proteolysis by ClpXP. In Staphylococcus epidermidis (strain ATCC 35984 / DSM 28319 / BCRC 17069 / CCUG 31568 / BM 3577 / RP62A), this protein is ClpXP adapter protein SpxH.